The following is a 106-amino-acid chain: Phosphoribosyl-ATP pyrophosphatase 1 (106 aa).

It belongs to the PRA-PH family.

Its subcellular location is the cytoplasm. The enzyme catalyses 1-(5-phospho-beta-D-ribosyl)-ATP + H2O = 1-(5-phospho-beta-D-ribosyl)-5'-AMP + diphosphate + H(+). The protein operates within amino-acid biosynthesis; L-histidine biosynthesis; L-histidine from 5-phospho-alpha-D-ribose 1-diphosphate: step 2/9. This Bradyrhizobium diazoefficiens (strain JCM 10833 / BCRC 13528 / IAM 13628 / NBRC 14792 / USDA 110) protein is Phosphoribosyl-ATP pyrophosphatase 1 (hisE1).